The primary structure comprises 551 residues: ATP synthase subunit alpha, mitochondrial (551 aa).

210 to 217 contacts ATP; the sequence is GDRQTGKT.

This sequence belongs to the ATPase alpha/beta chains family. In terms of assembly, F-type ATPases have 2 components, CF(1) - the catalytic core - and CF(0) - the membrane proton channel. CF(1) has five subunits: alpha(3), beta(3), gamma(1), delta(1), epsilon(1). CF(0) has three main subunits: a, b and c.

The protein localises to the mitochondrion. It localises to the mitochondrion inner membrane. Mitochondrial membrane ATP synthase (F(1)F(0) ATP synthase or Complex V) produces ATP from ADP in the presence of a proton gradient across the membrane which is generated by electron transport complexes of the respiratory chain. F-type ATPases consist of two structural domains, F(1) - containing the extramembraneous catalytic core, and F(0) - containing the membrane proton channel, linked together by a central stalk and a peripheral stalk. During catalysis, ATP synthesis in the catalytic domain of F(1) is coupled via a rotary mechanism of the central stalk subunits to proton translocation. Subunits alpha and beta form the catalytic core in F(1). Rotation of the central stalk against the surrounding alpha(3)beta(3) subunits leads to hydrolysis of ATP in three separate catalytic sites on the beta subunits. Subunit alpha does not bear the catalytic high-affinity ATP-binding sites. The chain is ATP synthase subunit alpha, mitochondrial (atp-1) from Neurospora crassa (strain ATCC 24698 / 74-OR23-1A / CBS 708.71 / DSM 1257 / FGSC 987).